The sequence spans 740 residues: NAD(P)H-quinone oxidoreductase subunit 5, chloroplastic (740 aa).

Helical transmembrane passes span 9-29 (WIIPFVPLLVTMLIGLGLLLI), 39-59 (IWAFPAVLLLSIVMVFSTKLA), 89-109 (IDPLTSIMSILITTVGIMVLI), 125-145 (FAYMSFFNTSMLGLVTSPNLI), 147-167 (IHIFWELVGMCSYLLIGFWFT), 185-205 (GDFGLLLGILGFYLITGSFEF), 231-251 (AFLLFLGAVAKSAQFPLHVWL), 259-279 (TPISALIHAATMVAAGIFLVA), 281-301 (LLPLFIGIPYIMNIISLIGLI), 328-348 (LGYIMLALGIGSYRAALFHLI), 355-375 (ALLFLGSGSIIHSMEPIVGYS), 397-417 (TTFFLGTLSLCGIPPLACFWS), 426-446 (WLYSPIFATIACYTAGLTAFY), 548-568 (TMLFPLLILAIFTLFVGCIGI), 607-627 (FYSVSIAYFGIFIASVLYGSV), and 719-739 (GRISSYLFLYLACVSIVLLLV).

This sequence belongs to the complex I subunit 5 family. In terms of assembly, NDH is composed of at least 16 different subunits, 5 of which are encoded in the nucleus.

It is found in the plastid. It localises to the chloroplast thylakoid membrane. The catalysed reaction is a plastoquinone + NADH + (n+1) H(+)(in) = a plastoquinol + NAD(+) + n H(+)(out). It carries out the reaction a plastoquinone + NADPH + (n+1) H(+)(in) = a plastoquinol + NADP(+) + n H(+)(out). Functionally, NDH shuttles electrons from NAD(P)H:plastoquinone, via FMN and iron-sulfur (Fe-S) centers, to quinones in the photosynthetic chain and possibly in a chloroplast respiratory chain. The immediate electron acceptor for the enzyme in this species is believed to be plastoquinone. Couples the redox reaction to proton translocation, and thus conserves the redox energy in a proton gradient. The polypeptide is NAD(P)H-quinone oxidoreductase subunit 5, chloroplastic (ndhF) (Nuphar advena (Common spatterdock)).